A 231-amino-acid polypeptide reads, in one-letter code: MGQKVNPTGIRLGITKPFASTWFASNKDFASNLDGDHKVREFLKEKLKRASLSKVVIERPAKSIRVTIHTARPGVVIGKKGEDVEKLRLAVSKIAGVPAQINIAEVRKPEMDAQLVADSIASQLERRVMFRRAMKRAVQNAMRLGAKGIKVQVSGRLGGADIARAEWYREGRVPLHTLRADIDYAIARGNTTYGVIGIKVWIFKGEIIGNMPLQAEVPAAKPKRKTNRKPK.

The 69-residue stretch at 39–107 folds into the KH type-2 domain; the sequence is VREFLKEKLK…PAQINIAEVR (69 aa).

The protein belongs to the universal ribosomal protein uS3 family. Part of the 30S ribosomal subunit. Forms a tight complex with proteins S10 and S14.

Functionally, binds the lower part of the 30S subunit head. Binds mRNA in the 70S ribosome, positioning it for translation. In Colwellia psychrerythraea (strain 34H / ATCC BAA-681) (Vibrio psychroerythus), this protein is Small ribosomal subunit protein uS3.